Reading from the N-terminus, the 200-residue chain is Outer-membrane lipoprotein carrier protein (200 aa).

Positions 1-18 are cleaved as a signal peptide; sequence MKAVVFAMVMAVSFNVFA.

It belongs to the LolA family. As to quaternary structure, monomer.

The protein resides in the periplasm. Participates in the translocation of lipoproteins from the inner membrane to the outer membrane. Only forms a complex with a lipoprotein if the residue after the N-terminal Cys is not an aspartate (The Asp acts as a targeting signal to indicate that the lipoprotein should stay in the inner membrane). This chain is Outer-membrane lipoprotein carrier protein, found in Idiomarina loihiensis (strain ATCC BAA-735 / DSM 15497 / L2-TR).